Reading from the N-terminus, the 175-residue chain is NADH-quinone oxidoreductase subunit I (175 aa).

2 consecutive 4Fe-4S ferredoxin-type domains span residues 69 to 98 and 115 to 144; these read KRDEQGRERCTACFCCMWICPANAIHIEAA and KKFEINLLRCIFCGLCEEACPKGAIYLDGT. [4Fe-4S] cluster is bound by residues cysteine 78, cysteine 81, cysteine 84, cysteine 88, cysteine 124, cysteine 127, cysteine 130, and cysteine 134.

This sequence belongs to the complex I 23 kDa subunit family. As to quaternary structure, NDH-1 is composed of 14 different subunits. Subunits NuoA, H, J, K, L, M, N constitute the membrane sector of the complex. [4Fe-4S] cluster is required as a cofactor.

The protein localises to the cell inner membrane. The enzyme catalyses a quinone + NADH + 5 H(+)(in) = a quinol + NAD(+) + 4 H(+)(out). Its function is as follows. NDH-1 shuttles electrons from NADH, via FMN and iron-sulfur (Fe-S) centers, to quinones in the respiratory chain. The immediate electron acceptor for the enzyme in this species is believed to be ubiquinone. Couples the redox reaction to proton translocation (for every two electrons transferred, four hydrogen ions are translocated across the cytoplasmic membrane), and thus conserves the redox energy in a proton gradient. The sequence is that of NADH-quinone oxidoreductase subunit I from Leptospira biflexa serovar Patoc (strain Patoc 1 / Ames).